The primary structure comprises 273 residues: tRNA (guanine-N(7)-)-methyltransferase (273 aa).

A disordered region spans residues 1 to 32; sequence MSATAKKSAAQLQREEEEARKKLKRLSKQGGV. S-adenosyl-L-methionine is bound by residues Gly-88, 111-112, 150-151, and Cys-170; these read EI and NC. Asp-173 is a catalytic residue. 248–250 serves as a coordination point for S-adenosyl-L-methionine; sequence TEE.

Belongs to the class I-like SAM-binding methyltransferase superfamily. TrmB family. As to quaternary structure, forms a complex with trm82.

It localises to the nucleus. It catalyses the reaction guanosine(46) in tRNA + S-adenosyl-L-methionine = N(7)-methylguanosine(46) in tRNA + S-adenosyl-L-homocysteine. Its pathway is tRNA modification; N(7)-methylguanine-tRNA biosynthesis. In terms of biological role, catalyzes the formation of N(7)-methylguanine at position 46 (m7G46) in tRNA. This Schizosaccharomyces pombe (strain 972 / ATCC 24843) (Fission yeast) protein is tRNA (guanine-N(7)-)-methyltransferase (trm8).